We begin with the raw amino-acid sequence, 399 residues long: Acetylornithine aminotransferase (399 aa).

Pyridoxal 5'-phosphate is bound by residues 97–98 (GA) and F130. Residue R133 coordinates N(2)-acetyl-L-ornithine. 215-218 (DEVQ) is a pyridoxal 5'-phosphate binding site. K244 bears the N6-(pyridoxal phosphate)lysine mark. Residue T272 participates in N(2)-acetyl-L-ornithine binding. Pyridoxal 5'-phosphate is bound at residue T273.

It belongs to the class-III pyridoxal-phosphate-dependent aminotransferase family. ArgD subfamily. As to quaternary structure, homodimer. It depends on pyridoxal 5'-phosphate as a cofactor.

The protein localises to the cytoplasm. It catalyses the reaction N(2)-acetyl-L-ornithine + 2-oxoglutarate = N-acetyl-L-glutamate 5-semialdehyde + L-glutamate. Its pathway is amino-acid biosynthesis; L-arginine biosynthesis; N(2)-acetyl-L-ornithine from L-glutamate: step 4/4. The protein is Acetylornithine aminotransferase of Mesorhizobium japonicum (strain LMG 29417 / CECT 9101 / MAFF 303099) (Mesorhizobium loti (strain MAFF 303099)).